Consider the following 209-residue polypeptide: Uridine kinase (209 aa).

Residue 16 to 23 (GGSGSGKT) participates in ATP binding.

Belongs to the uridine kinase family.

It localises to the cytoplasm. It carries out the reaction uridine + ATP = UMP + ADP + H(+). The catalysed reaction is cytidine + ATP = CMP + ADP + H(+). Its pathway is pyrimidine metabolism; CTP biosynthesis via salvage pathway; CTP from cytidine: step 1/3. The protein operates within pyrimidine metabolism; UMP biosynthesis via salvage pathway; UMP from uridine: step 1/1. This Lactiplantibacillus plantarum (strain ATCC BAA-793 / NCIMB 8826 / WCFS1) (Lactobacillus plantarum) protein is Uridine kinase.